Consider the following 66-residue polypeptide: MAKGKDVRVRVILECINCVRNGVNKESPGVSRYITQKNRHNTPSRLELRKFCPYCFKHTIHGEIKK.

The protein belongs to the bacterial ribosomal protein bL33 family.

Its subcellular location is the plastid. It is found in the chloroplast. The protein is Large ribosomal subunit protein bL33c of Platanus occidentalis (Sycamore).